The sequence spans 501 residues: Glycerol kinase 1 (501 aa).

T16 provides a ligand contact to ADP. The ATP site is built by T16, T17, and S18. T16 is a sn-glycerol 3-phosphate binding site. Position 20 (R20) interacts with ADP. Residues R84, E85, Y135, and D242 each coordinate sn-glycerol 3-phosphate. Positions 84, 85, 135, 242, and 243 each coordinate glycerol. The ADP site is built by T264 and G307. T264, G307, Q311, and G408 together coordinate ATP. G408 lines the ADP pocket.

Belongs to the FGGY kinase family.

The catalysed reaction is glycerol + ATP = sn-glycerol 3-phosphate + ADP + H(+). It participates in polyol metabolism; glycerol degradation via glycerol kinase pathway; sn-glycerol 3-phosphate from glycerol: step 1/1. In terms of biological role, key enzyme in the regulation of glycerol uptake and metabolism. Catalyzes the phosphorylation of glycerol to yield sn-glycerol 3-phosphate. The sequence is that of Glycerol kinase 1 from Saccharolobus solfataricus (strain ATCC 35092 / DSM 1617 / JCM 11322 / P2) (Sulfolobus solfataricus).